We begin with the raw amino-acid sequence, 428 residues long: Leucine-rich repeat-containing protein 42 (428 aa).

5 LRR repeats span residues 149 to 170, 174 to 195, 202 to 222, 234 to 255, and 259 to 280; these read VLCS…EEIK, ELTC…LEHL, SVTQ…RKMT, NLSL…GYLF, and KLNC…KHKL. The tract at residues 379-412 is disordered; it reads KHEALSSQESKKSKKRAFEEPEKEQGSSSQTSKQ. Basic and acidic residues predominate over residues 394–403; it reads RAFEEPEKEQ. Residues Ser-406 and Ser-407 each carry the phosphoserine modification.

It belongs to the LRRC42 family.

The sequence is that of Leucine-rich repeat-containing protein 42 (LRRC42) from Bos taurus (Bovine).